Reading from the N-terminus, the 393-residue chain is MSHVMNTYARLPVTFVKGEGVWLWDDQGNRYLDALSGIAVCGVGHCHPVLVKALCEQVSTLIHTSNVYHIQHQERLADRLTSLSGLEKAFFCNSGAEANEAAIKLARLYGHNQGINLPTIIVMERSFHGRTMATLTATGNRKTQAGFEPLLTGFVRVPYDDLEAVNKVAANNREIVAILLETYQGEGGVNFPQANYLQGLRRICDQNGWLLMLDEVQCGLGRTGKWFAFQHSEVMPDAMTLAKGLGSGVPIGACLAGGKAAEVFKPGNHASTFGGNPLACRAALTTLDIIEQEGLMDNAVTIGNFMWEEFGRRLQAWQDVLKIRGQGMMIGIELPVPCSELVPEALKRRVLVNVTSEKVVRLLPALNMQKAEAEQVVTEVSALITWFLESRVK.

Residues 95–96 (GA) and F127 contribute to the pyridoxal 5'-phosphate site. R130 is a N(2)-acetyl-L-ornithine binding site. Residue 214–217 (DEVQ) participates in pyridoxal 5'-phosphate binding. K243 is subject to N6-(pyridoxal phosphate)lysine. N(2)-acetyl-L-ornithine is bound at residue S271. T272 provides a ligand contact to pyridoxal 5'-phosphate.

This sequence belongs to the class-III pyridoxal-phosphate-dependent aminotransferase family. ArgD subfamily. As to quaternary structure, homodimer. Requires pyridoxal 5'-phosphate as cofactor.

Its subcellular location is the cytoplasm. The enzyme catalyses N(2)-acetyl-L-ornithine + 2-oxoglutarate = N-acetyl-L-glutamate 5-semialdehyde + L-glutamate. The protein operates within amino-acid biosynthesis; L-arginine biosynthesis; N(2)-acetyl-L-ornithine from L-glutamate: step 4/4. This chain is Acetylornithine aminotransferase, found in Nitrosomonas europaea (strain ATCC 19718 / CIP 103999 / KCTC 2705 / NBRC 14298).